The chain runs to 110 residues: Insulin-1 (110 aa).

The signal sequence occupies residues 1 to 24 (MALWMRFLPLLALLVLWEPKPAQA). 3 disulfides stabilise this stretch: Cys31-Cys96, Cys43-Cys109, and Cys95-Cys100. The propeptide at 57-87 (EVEDPQVPQLELGGGPEAGDLQTLALEVARQ) is c peptide.

Belongs to the insulin family. Heterodimer of a B chain and an A chain linked by two disulfide bonds.

It is found in the secreted. Functionally, insulin decreases blood glucose concentration. It increases cell permeability to monosaccharides, amino acids and fatty acids. It accelerates glycolysis, the pentose phosphate cycle, and glycogen synthesis in liver. The sequence is that of Insulin-1 (Ins1) from Rattus norvegicus (Rat).